A 411-amino-acid polypeptide reads, in one-letter code: Probable tRNA pseudouridine synthase D (411 aa).

Residue Asp-81 is the Nucleophile of the active site. Residues 154–375 (GTPNFFGLQR…SGSYRPADTL (222 aa)) enclose the TRUD domain.

It belongs to the pseudouridine synthase TruD family.

It carries out the reaction uridine(13) in tRNA = pseudouridine(13) in tRNA. Could be responsible for synthesis of pseudouridine from uracil-13 in transfer RNAs. This chain is Probable tRNA pseudouridine synthase D, found in Archaeoglobus fulgidus (strain ATCC 49558 / DSM 4304 / JCM 9628 / NBRC 100126 / VC-16).